Here is a 101-residue protein sequence, read N- to C-terminus: Non-histone chromosomal protein HMG-14 (101 aa).

A disordered region spans residues methionine 1–aspartate 101. ADP-ribosylserine is present on serine 7. Serine 8 bears the Phosphoserine mark. At lysine 14 the chain carries N6-acetyllysine. Serine 21 is modified (phosphoserine). ADP-ribosylserine; alternate is present on serine 25. Serine 25 carries the phosphoserine; alternate modification. Residue lysine 27 is modified to N6-acetyllysine. Composition is skewed to basic and acidic residues over residues valine 33–valine 51 and glutamate 70–glutamate 86. Residue threonine 82 is modified to Phosphothreonine. Lysine 83 carries the post-translational modification N6-acetyllysine. 3 positions are modified to phosphoserine: serine 87, serine 90, and serine 100.

The protein belongs to the HMGN family. Interacts with transcriptional regulator SEHBP. In terms of processing, phosphorylation on Ser-21 and Ser-25 weakens binding to nucleosomes and increases the rate of H3 phosphorylation.

It is found in the nucleus. Binds to the inner side of the nucleosomal DNA thus altering the interaction between the DNA and the histone octamer. May be involved in the process which maintains transcribable genes in a unique chromatin conformation. Inhibits the phosphorylation of nucleosomal histones H3 and H2A by RPS6KA5/MSK1 and RPS6KA3/RSK2. The chain is Non-histone chromosomal protein HMG-14 (HMGN1) from Bos taurus (Bovine).